Consider the following 168-residue polypeptide: Large ribosomal subunit protein bL9 (168 aa).

The disordered stretch occupies residues 148 to 168; it reads ENGEGSVQPAAEAAEVASTEA. Over residues 157 to 168 the composition is skewed to low complexity; the sequence is AAEAAEVASTEA.

It belongs to the bacterial ribosomal protein bL9 family.

Binds to the 23S rRNA. In Herpetosiphon aurantiacus (strain ATCC 23779 / DSM 785 / 114-95), this protein is Large ribosomal subunit protein bL9.